Consider the following 441-residue polypeptide: Lysine histidine transporter 2 (441 aa).

Over 1–32 (MGNSEMSASEVAAAKQKNVDDWLPITSSRNAK) the chain is Cytoplasmic. A helical transmembrane segment spans residues 33–53 (WWYSAFHNVTAMVGAGVLSLP). Topologically, residues 54 to 58 (YAMSN) are extracellular. Residues 59–79 (LGWGPGVTIMVMSWIITLYTL) form a helical membrane-spanning segment. At 80–110 (WQMVEMHEIVPGKRLDRYHELGQHAFGEKLG) the chain is on the cytoplasmic side. The chain crosses the membrane as a helical span at residues 111–131 (LWIVVPQQLIVEVGVDIVYMV). The Extracellular segment spans residues 132-152 (TGGASLKKVHQLVCPDCKEIR). Residues 153–173 (TTFWIMIFASVHFVISHLPNF) traverse the membrane as a helical segment. At 174-175 (NS) the chain is on the cytoplasmic side. The helical transmembrane segment at 176 to 196 (ISIISLAAAVMSLTYSTIAWA) threads the bilayer. Residues 197 to 222 (ASVHKGVHPDVDYSPRASTDVGKVFN) are Extracellular-facing. A helical membrane pass occupies residues 223–243 (FLNALGDVAFAYAGHNVVLEI). Over 244–263 (QATIPSTPEMPSKVPMWRGV) the chain is Cytoplasmic. The helical transmembrane segment at 264 to 284 (IVAYIVVAICYFPVAFLGYYI) threads the bilayer. Residues 285–300 (FGNSVDDNILITLEKP) lie on the Extracellular side of the membrane. Residues 301–321 (IWLIAMANMFVVIHVIGSYQI) form a helical membrane-spanning segment. Over 322-347 (FAMPVFDMLETVLVKKMNFNPSFKLR) the chain is Cytoplasmic. A helical membrane pass occupies residues 348-370 (FITRSLYVAFTMIVAICVPFFGG). The Extracellular portion of the chain corresponds to 371 to 373 (LLG). Residues 374–396 (FFGGFAFAPTTYYLPCIMWLVLK) traverse the membrane as a helical segment. Topologically, residues 397 to 406 (KPKRFGLSWT) are cytoplasmic. Residues 407 to 427 (ANWFCIIVGVLLTILAPIGGL) form a helical membrane-spanning segment. Residues 428-441 (RTIIINAKTYKFFS) are Extracellular-facing.

The protein belongs to the amino acid/polyamine transporter 2 family. Amino acid/auxin permease (AAAP) (TC 2.A.18.2) subfamily. In terms of tissue distribution, expressed in flower buds and to lower levels in leaves and stems. Not detected in roots and siliques. Restricted to the tapetum cell layer.

The protein localises to the cell membrane. Its activity is regulated as follows. Inhibited by diethylstibestrol (DES), 2,4-dinitrophenol (DNP) and carbonlycyanide m-chlorophenylhydrazone (CCCP). Functionally, amino acid-proton symporter. Transporter with a broad specificity for neutral and acidic amino acids. Basic amino acids are only marginally transported. Involved in import of amino acids into the tapetum cells for synthesis of compounds important for microspore structure. The protein is Lysine histidine transporter 2 (LHT2) of Arabidopsis thaliana (Mouse-ear cress).